Here is a 595-residue protein sequence, read N- to C-terminus: Isoprene synthase, chloroplastic (595 aa).

The N-terminal 37 residues, Met-1–Arg-37, are a transit peptide targeting the chloroplast. Dimethylallyl diphosphate is bound at residue Asp-345. Mg(2+) is bound by residues Asp-345 and Asp-349. The DDXXD motif signature appears at Asp-345 to Asp-349. 3 residues coordinate dimethylallyl diphosphate: Glu-423, Arg-486, and Asn-489. Mg(2+)-binding residues include Asn-489, Ser-493, and Glu-497.

The protein belongs to the terpene synthase family. Tpsb subfamily. Mg(2+) serves as cofactor. Predominantly expressed in leaves.

It localises to the plastid. The protein localises to the chloroplast. The enzyme catalyses dimethylallyl diphosphate = isoprene + diphosphate. It functions in the pathway terpene metabolism. In terms of biological role, lyase that catalyzes the formation of isoprene from dimethylallyl diphosphate, but not from isopentenyl diphosphate or geranyl diphosphate. This Populus alba (White poplar) protein is Isoprene synthase, chloroplastic.